A 20-amino-acid chain; its full sequence is Antimicrobial peptide AJN-10 (20 aa).

It is found in the secreted. Functionally, displays antimicrobial activity against the Gram-negative bacterium A.hydrophila. The chain is Antimicrobial peptide AJN-10 from Anguilla japonica (Japanese eel).